The following is a 385-amino-acid chain: Muconate cycloisomerase 1-2 (385 aa).

The active site involves Lys171. Glu226 and Asp251 together coordinate Mn(2+).

It belongs to the mandelate racemase/muconate lactonizing enzyme family. As to quaternary structure, homooctamer. Requires Mn(2+) as cofactor.

The catalysed reaction is (S)-muconolactone = cis,cis-muconate + H(+). It functions in the pathway aromatic compound metabolism; beta-ketoadipate pathway; 5-oxo-4,5-dihydro-2-furylacetate from catechol: step 2/3. Its function is as follows. Catalyzes a syn cycloisomerization. The protein is Muconate cycloisomerase 1-2 (catB2) of Acinetobacter lwoffii.